The sequence spans 550 residues: Chaperonin GroEL (550 aa).

Residues 30–33 (TLGP), K51, 87–91 (DGTTT), G414, and D494 contribute to the ATP site.

This sequence belongs to the chaperonin (HSP60) family. As to quaternary structure, forms a cylinder of 14 subunits composed of two heptameric rings stacked back-to-back. Interacts with the co-chaperonin GroES.

It is found in the cytoplasm. The catalysed reaction is ATP + H2O + a folded polypeptide = ADP + phosphate + an unfolded polypeptide.. In terms of biological role, together with its co-chaperonin GroES, plays an essential role in assisting protein folding. The GroEL-GroES system forms a nano-cage that allows encapsulation of the non-native substrate proteins and provides a physical environment optimized to promote and accelerate protein folding. This Buchnera aphidicola subsp. Thelaxes suberi protein is Chaperonin GroEL.